The primary structure comprises 464 residues: MVRVRFAPSPTGHLHVGGARTALFNWMFARKEGGKFILRIEDTDTERSSREYEQQILESLRWCGLDWDEGPDIGGDFGPYRQSERLEIYREYAKKLVEDKRAYYVVYDKEDPSKELFTTYDYPHEYKEKGHPVTIKFKVLPGKTSFEDLLKGYMEFDNSTLEDFIIMKSNGFPTYNFAVVVDDHLMRISHVFRGEDHLSNTPKQLMIYEAFGWEAPVFMHIPLILGPDRTPLSKRHGATSVEHFRREGILSRALMNYLALLGWRVEGDEIFTIEEKLQSFDPKDISNKGVIFDYQKLEWVNGKHMRRIDLEDLKREFIEWAKYVGREIPSLNESYFTEALRICREKVNTLSQLYDIMYPFMSDDYEYEKDYVEKFLKREEAERVLEEAKKAFKDLNSWNMEEIEKTLRDLSEKGLASKKVVFQLIRGAVTGKLVTPGLFETIEVLGKERTLKRLERTLQFLKKT.

The 'HIGH' region signature appears at 8–18 (PSPTGHLHVGG). The 'KMSKS' region motif lies at 231-235 (PLSKR). Lysine 234 serves as a coordination point for ATP.

The protein belongs to the class-I aminoacyl-tRNA synthetase family. Glutamate--tRNA ligase type 1 subfamily. Monomer.

It is found in the cytoplasm. It carries out the reaction tRNA(Glu) + L-glutamate + ATP = L-glutamyl-tRNA(Glu) + AMP + diphosphate. Its function is as follows. Catalyzes the attachment of glutamate to tRNA(Glu) in a two-step reaction: glutamate is first activated by ATP to form Glu-AMP and then transferred to the acceptor end of tRNA(Glu). The chain is Glutamate--tRNA ligase 1 from Thermotoga sp. (strain RQ2).